The sequence spans 147 residues: Hemoglobin subunit gamma (147 aa).

The Globin domain occupies 3-147 (NFTAEDKAAI…VASALASRYH (145 aa)). Residues H64 and H93 each coordinate heme b.

Belongs to the globin family. As to quaternary structure, heterotetramer of two alpha chains and two gamma chains in fetal hemoglobin (Hb F). In terms of tissue distribution, red blood cells.

Its function is as follows. Gamma chains make up the fetal hemoglobin F, in combination with alpha chains. This chain is Hemoglobin subunit gamma (HBG), found in Alouatta seniculus (Red howler monkey).